Reading from the N-terminus, the 154-residue chain is Large ribosomal subunit protein uL13 (154 aa).

The protein belongs to the universal ribosomal protein uL13 family. In terms of assembly, part of the 50S ribosomal subunit.

Its function is as follows. This protein is one of the early assembly proteins of the 50S ribosomal subunit, although it is not seen to bind rRNA by itself. It is important during the early stages of 50S assembly. The protein is Large ribosomal subunit protein uL13 of Rhodospirillum rubrum (strain ATCC 11170 / ATH 1.1.1 / DSM 467 / LMG 4362 / NCIMB 8255 / S1).